The chain runs to 133 residues: Small ribosomal subunit protein uS8 (133 aa).

This sequence belongs to the universal ribosomal protein uS8 family. Part of the 30S ribosomal subunit.

Its function is as follows. One of the primary rRNA binding proteins, it binds directly to 16S rRNA central domain where it helps coordinate assembly of the platform of the 30S subunit. In Aeropyrum pernix (strain ATCC 700893 / DSM 11879 / JCM 9820 / NBRC 100138 / K1), this protein is Small ribosomal subunit protein uS8.